Consider the following 449-residue polypeptide: Trigger factor (449 aa).

The PPIase FKBP-type domain maps to 174 to 261 (GDIAVVGFKG…LKDLKTRELP (88 aa)). Residues 430 to 449 (ENSTVTEKAPDKDKPSVTDA) form a disordered region. Basic and acidic residues predominate over residues 437-449 (KAPDKDKPSVTDA).

Belongs to the FKBP-type PPIase family. Tig subfamily.

It localises to the cytoplasm. The catalysed reaction is [protein]-peptidylproline (omega=180) = [protein]-peptidylproline (omega=0). Functionally, involved in protein export. Acts as a chaperone by maintaining the newly synthesized protein in an open conformation. Functions as a peptidyl-prolyl cis-trans isomerase. The polypeptide is Trigger factor (Synechococcus sp. (strain CC9311)).